A 523-amino-acid polypeptide reads, in one-letter code: 2-isopropylmalate synthase (523 aa).

Positions 5–267 (VVIFDTTLRD…QTRINHNEIW (263 aa)) constitute a Pyruvate carboxyltransferase domain. Positions 14, 202, 204, and 238 each coordinate Mn(2+). The tract at residues 392-523 (RMDYFSVQSG…QNKENNKETV (132 aa)) is regulatory domain.

It belongs to the alpha-IPM synthase/homocitrate synthase family. LeuA type 1 subfamily. As to quaternary structure, homodimer. Requires Mn(2+) as cofactor.

The protein localises to the cytoplasm. The catalysed reaction is 3-methyl-2-oxobutanoate + acetyl-CoA + H2O = (2S)-2-isopropylmalate + CoA + H(+). It participates in amino-acid biosynthesis; L-leucine biosynthesis; L-leucine from 3-methyl-2-oxobutanoate: step 1/4. Functionally, catalyzes the condensation of the acetyl group of acetyl-CoA with 3-methyl-2-oxobutanoate (2-ketoisovalerate) to form 3-carboxy-3-hydroxy-4-methylpentanoate (2-isopropylmalate). This chain is 2-isopropylmalate synthase, found in Enterobacter sp. (strain 638).